A 253-amino-acid chain; its full sequence is Indole-3-glycerol phosphate synthase (253 aa).

It belongs to the TrpC family.

The enzyme catalyses 1-(2-carboxyphenylamino)-1-deoxy-D-ribulose 5-phosphate + H(+) = (1S,2R)-1-C-(indol-3-yl)glycerol 3-phosphate + CO2 + H2O. It functions in the pathway amino-acid biosynthesis; L-tryptophan biosynthesis; L-tryptophan from chorismate: step 4/5. The chain is Indole-3-glycerol phosphate synthase from Bacillus cereus (strain ATCC 14579 / DSM 31 / CCUG 7414 / JCM 2152 / NBRC 15305 / NCIMB 9373 / NCTC 2599 / NRRL B-3711).